Here is a 269-residue protein sequence, read N- to C-terminus: Hydroxyethylthiazole kinase (269 aa).

Methionine 45 serves as a coordination point for substrate. Arginine 121 and threonine 167 together coordinate ATP. Position 194 (glycine 194) interacts with substrate.

It belongs to the Thz kinase family. Mg(2+) serves as cofactor.

It catalyses the reaction 5-(2-hydroxyethyl)-4-methylthiazole + ATP = 4-methyl-5-(2-phosphooxyethyl)-thiazole + ADP + H(+). It participates in cofactor biosynthesis; thiamine diphosphate biosynthesis; 4-methyl-5-(2-phosphoethyl)-thiazole from 5-(2-hydroxyethyl)-4-methylthiazole: step 1/1. Functionally, catalyzes the phosphorylation of the hydroxyl group of 4-methyl-5-beta-hydroxyethylthiazole (THZ). In Brevibacillus brevis (strain 47 / JCM 6285 / NBRC 100599), this protein is Hydroxyethylthiazole kinase.